We begin with the raw amino-acid sequence, 143 residues long: Small ribosomal subunit protein eS19B (143 aa).

This sequence belongs to the eukaryotic ribosomal protein eS19 family. Component of the small ribosomal subunit (SSU). Mature yeast ribosomes consist of a small (40S) and a large (60S) subunit. The 40S small subunit contains 1 molecule of ribosomal RNA (18S rRNA) and at least 33 different proteins. The large 60S subunit contains 3 rRNA molecules (25S, 5.8S and 5S rRNA) and at least 46 different proteins.

The protein localises to the cytoplasm. Its subcellular location is the nucleus. Component of the ribosome, a large ribonucleoprotein complex responsible for the synthesis of proteins in the cell. The small ribosomal subunit (SSU) binds messenger RNAs (mRNAs) and translates the encoded message by selecting cognate aminoacyl-transfer RNA (tRNA) molecules. The large subunit (LSU) contains the ribosomal catalytic site termed the peptidyl transferase center (PTC), which catalyzes the formation of peptide bonds, thereby polymerizing the amino acids delivered by tRNAs into a polypeptide chain. The nascent polypeptides leave the ribosome through a tunnel in the LSU and interact with protein factors that function in enzymatic processing, targeting, and the membrane insertion of nascent chains at the exit of the ribosomal tunnel. eS19 is required for proper maturation of the small (40S) ribosomal subunit. Binds to 40S pre-ribosomal particles, probably required after association of NOC4 but before association of ENP1, TSR1 and RIO2 with 20/21S pre-rRNA. This is Small ribosomal subunit protein eS19B (rps1902) from Schizosaccharomyces pombe (strain 972 / ATCC 24843) (Fission yeast).